The chain runs to 366 residues: MDNYEYSELLKKLKNKVGNIASIIKPEEIKARLKEIENLENSPSFWSDVKQAGIIGKEKTKISNLLKNYENAFNALNDASELFDLANSENDLDTIQALFDDAPNLEDLIVSLEISMLLSGENDGKNAIVSIHPGAGGTESNDWASMLYRMYLRFCEREGFKVETLDFQEGEEAGLKDVSFLVKGENAYGYLKAENGIHRLVRTSPFDSAGRRHTSFSSVMVSPELDDDIEIEIEDKDIRIDYYRASGAGGQHVNKTESAVRITHMPSGIVVQCQNDRSQHKNKATAFKMLKSRLYELELMKQQDEANSSEKSEIGWGHQIRSYVLFPYQQVKDTRSNEAFSQVDNILDGDIKKMIEGVLIAQKAQD.

Position 251 is an N5-methylglutamine (Gln-251).

Belongs to the prokaryotic/mitochondrial release factor family. Post-translationally, methylated by PrmC. Methylation increases the termination efficiency of RF2.

The protein resides in the cytoplasm. In terms of biological role, peptide chain release factor 2 directs the termination of translation in response to the peptide chain termination codons UGA and UAA. In Campylobacter lari (strain RM2100 / D67 / ATCC BAA-1060), this protein is Peptide chain release factor 2.